The chain runs to 120 residues: ATP-dependent Clp protease adapter protein ClpS (120 aa).

It belongs to the ClpS family. Binds to the N-terminal domain of the chaperone ClpA.

Its function is as follows. Involved in the modulation of the specificity of the ClpAP-mediated ATP-dependent protein degradation. The polypeptide is ATP-dependent Clp protease adapter protein ClpS (Pseudomonas savastanoi pv. phaseolicola (strain 1448A / Race 6) (Pseudomonas syringae pv. phaseolicola (strain 1448A / Race 6))).